A 427-amino-acid polypeptide reads, in one-letter code: 3-phosphoshikimate 1-carboxyvinyltransferase (427 aa).

Residues Lys22, Ser23, and Arg27 each coordinate 3-phosphoshikimate. Position 22 (Lys22) interacts with phosphoenolpyruvate. Phosphoenolpyruvate-binding residues include Gly96 and Arg124. Residues Ser169, Ser170, Gln171, Ser197, Asp313, Asn336, and Lys340 each coordinate 3-phosphoshikimate. Gln171 serves as a coordination point for phosphoenolpyruvate. Residue Asp313 is the Proton acceptor of the active site. Phosphoenolpyruvate contacts are provided by Arg344, Arg386, and Lys411.

Belongs to the EPSP synthase family. In terms of assembly, monomer.

It localises to the cytoplasm. The catalysed reaction is 3-phosphoshikimate + phosphoenolpyruvate = 5-O-(1-carboxyvinyl)-3-phosphoshikimate + phosphate. It participates in metabolic intermediate biosynthesis; chorismate biosynthesis; chorismate from D-erythrose 4-phosphate and phosphoenolpyruvate: step 6/7. In terms of biological role, catalyzes the transfer of the enolpyruvyl moiety of phosphoenolpyruvate (PEP) to the 5-hydroxyl of shikimate-3-phosphate (S3P) to produce enolpyruvyl shikimate-3-phosphate and inorganic phosphate. The protein is 3-phosphoshikimate 1-carboxyvinyltransferase of Citrobacter koseri (strain ATCC BAA-895 / CDC 4225-83 / SGSC4696).